A 508-amino-acid chain; its full sequence is Cobalamin biosynthesis protein CobIJ (508 aa).

A precorrin-2 C20-methyltransferase region spans residues 1 to 243 (MSARGTLWGV…AMLPGGRRRA (243 aa)). A precorrin-3 methylase region spans residues 244–508 (LLTGTVAVVG…TATKSSRHSD (265 aa)). The segment at 489–508 (PRRYPEAGRATATKSSRHSD) is disordered.

This sequence belongs to the precorrin methyltransferase family.

The catalysed reaction is precorrin-2 + S-adenosyl-L-methionine = precorrin-3A + S-adenosyl-L-homocysteine + H(+). The enzyme catalyses precorrin-3B + S-adenosyl-L-methionine = precorrin-4 + S-adenosyl-L-homocysteine + 3 H(+). It functions in the pathway cofactor biosynthesis; adenosylcobalamin biosynthesis; cob(II)yrinate a,c-diamide from precorrin-2 (aerobic route): step 1/10. Its pathway is cofactor biosynthesis; adenosylcobalamin biosynthesis; cob(II)yrinate a,c-diamide from precorrin-2 (aerobic route): step 3/10. Methylates precorrin-2 at the C-20 position to produce precorrin-3A. The sequence is that of Cobalamin biosynthesis protein CobIJ (cobIJ) from Mycobacterium bovis (strain ATCC BAA-935 / AF2122/97).